A 377-amino-acid polypeptide reads, in one-letter code: Succinyl-diaminopimelate desuccinylase (377 aa).

Residue His68 participates in Zn(2+) binding. Residue Asp70 is part of the active site. Zn(2+) is bound at residue Asp101. Glu135 acts as the Proton acceptor in catalysis. Zn(2+) contacts are provided by Glu136, Glu164, and His350.

The protein belongs to the peptidase M20A family. DapE subfamily. In terms of assembly, homodimer. Zn(2+) is required as a cofactor. Requires Co(2+) as cofactor.

It catalyses the reaction N-succinyl-(2S,6S)-2,6-diaminopimelate + H2O = (2S,6S)-2,6-diaminopimelate + succinate. It participates in amino-acid biosynthesis; L-lysine biosynthesis via DAP pathway; LL-2,6-diaminopimelate from (S)-tetrahydrodipicolinate (succinylase route): step 3/3. In terms of biological role, catalyzes the hydrolysis of N-succinyl-L,L-diaminopimelic acid (SDAP), forming succinate and LL-2,6-diaminopimelate (DAP), an intermediate involved in the bacterial biosynthesis of lysine and meso-diaminopimelic acid, an essential component of bacterial cell walls. In Acinetobacter baumannii (strain AB0057), this protein is Succinyl-diaminopimelate desuccinylase.